The primary structure comprises 750 residues: Photosystem I P700 chlorophyll a apoprotein A1 (750 aa).

Transmembrane regions (helical) follow at residues 70–93, 156–179, 195–219, 291–309, 346–369, 385–411, 433–455, and 531–549; these read VFSAHFGQLSIIFLWLSGMYFHGA, LYCTAIGALIFAALMLFAGWFHYH, LNHHLAGLLGLGSLSWAGHQVHVSL, IAHHHLAIAILFLIAGHMY, WHAQLSLNLAMLGSLTIVVAHHMY, LSLFTHHMWIGGFLIVGAAAHAAIFMV, AIISHLNWACIFLGFHSFGLYIH, and FLVHHIHAFTIHVTVLILL. Cys573 and Cys582 together coordinate [4Fe-4S] cluster. 2 helical membrane passes run 589 to 610 and 664 to 686; these read HVFLGLFWMYNAISVVIFHFSW and LSAYGLFFLGAHFVWAFSLMFLF. Chlorophyll a' is bound at residue His675. Residues Met683 and Tyr691 each contribute to the chlorophyll a site. Residue Trp692 coordinates phylloquinone. A helical membrane pass occupies residues 724 to 744; that stretch reads AVGVTHYLLGGIATTWAFFLA.

It belongs to the PsaA/PsaB family. In terms of assembly, the PsaA/B heterodimer binds the P700 chlorophyll special pair and subsequent electron acceptors. PSI consists of a core antenna complex that captures photons, and an electron transfer chain that converts photonic excitation into a charge separation. The eukaryotic PSI reaction center is composed of at least 11 subunits. Requires P700 is a chlorophyll a/chlorophyll a' dimer, A0 is one or more chlorophyll a, A1 is one or both phylloquinones and FX is a shared 4Fe-4S iron-sulfur center. as cofactor.

It localises to the plastid. The protein localises to the chloroplast thylakoid membrane. The enzyme catalyses reduced [plastocyanin] + hnu + oxidized [2Fe-2S]-[ferredoxin] = oxidized [plastocyanin] + reduced [2Fe-2S]-[ferredoxin]. In terms of biological role, psaA and PsaB bind P700, the primary electron donor of photosystem I (PSI), as well as the electron acceptors A0, A1 and FX. PSI is a plastocyanin-ferredoxin oxidoreductase, converting photonic excitation into a charge separation, which transfers an electron from the donor P700 chlorophyll pair to the spectroscopically characterized acceptors A0, A1, FX, FA and FB in turn. Oxidized P700 is reduced on the lumenal side of the thylakoid membrane by plastocyanin. This is Photosystem I P700 chlorophyll a apoprotein A1 from Coffea arabica (Arabian coffee).